A 511-amino-acid chain; its full sequence is ATP synthase subunit alpha, plastid (511 aa).

Residue 170 to 177 (GDRQTGKT) participates in ATP binding.

This sequence belongs to the ATPase alpha/beta chains family. In terms of assembly, F-type ATPases have 2 components, CF(1) - the catalytic core - and CF(0) - the membrane proton channel. CF(1) has five subunits: alpha(3), beta(3), gamma(1), delta(1), epsilon(1). CF(0) has four main subunits: a, b, b' and c.

The protein localises to the plastid membrane. The catalysed reaction is ATP + H2O + 4 H(+)(in) = ADP + phosphate + 5 H(+)(out). In terms of biological role, produces ATP from ADP in the presence of a proton gradient across the membrane. The alpha chain is a regulatory subunit. The polypeptide is ATP synthase subunit alpha, plastid (Cuscuta reflexa (Southern Asian dodder)).